The sequence spans 221 residues: Transcription factor HES-4 (221 aa).

Positions 1–22 (MAADTPGKPSASPMAGAPASAS) are enriched in low complexity. Positions 1–49 (MAADTPGKPSASPMAGAPASASRTPDKPRSAAEHRKSSKPVMEKRRRAR) are disordered. Positions 24-35 (TPDKPRSAAEHR) are enriched in basic and acidic residues. In terms of domain architecture, bHLH spans 34 to 91 (HRKSSKPVMEKRRRARINESLAQLKTLILDALRKESSRHSKLEKADILEMTVRHLRSL). Residues 110–143 (YRAGFHECLAEVNRFLAGCEGVPADVRSRLLGHL) enclose the Orange domain. Positions 201 to 221 (LPAAPRAGPQGPGGPWRPWLR) are disordered. The WRPW motif signature appears at 216-219 (WRPW).

As to quaternary structure, transcription repression requires formation of a complex with a corepressor protein of the Groucho/TLE family.

The protein resides in the nucleus. Its function is as follows. Transcriptional repressor. Binds DNA on N-box motifs: 5'-CACNAG-3'. The polypeptide is Transcription factor HES-4 (HES4) (Homo sapiens (Human)).